We begin with the raw amino-acid sequence, 200 residues long: Prostamide/prostaglandin F synthase (200 aa).

The protein belongs to the peroxiredoxin-like PRXL2 family. Prostamide/prostaglandin F synthase subfamily.

Its subcellular location is the cytoplasm. The protein resides in the cytosol. The enzyme catalyses prostaglandin H2 + [thioredoxin]-dithiol = prostaglandin F2alpha + [thioredoxin]-disulfide. It carries out the reaction prostamide F2alpha + [thioredoxin]-disulfide = prostamide H2 + [thioredoxin]-dithiol. Catalyzes the reduction of prostaglandin-ethanolamide H(2) (prostamide H(2)) to prostamide F(2alpha) with NADPH as proton donor. Also able to reduce prostaglandin H(2) to prostaglandin F(2alpha). This chain is Prostamide/prostaglandin F synthase (prxl2b), found in Salmo salar (Atlantic salmon).